The sequence spans 93 residues: Small ribosomal subunit protein bS18c (93 aa).

It belongs to the bacterial ribosomal protein bS18 family. As to quaternary structure, part of the 30S ribosomal subunit.

Its subcellular location is the plastid. The protein resides in the chloroplast. This is Small ribosomal subunit protein bS18c from Pinus koraiensis (Korean pine).